We begin with the raw amino-acid sequence, 257 residues long: Phosphonates import ATP-binding protein PhnC (257 aa).

In terms of domain architecture, ABC transporter spans Ile2–Val246. Residue Gly35 to Ser42 coordinates ATP.

Belongs to the ABC transporter superfamily. Phosphonates importer (TC 3.A.1.9.1) family. In terms of assembly, the complex is composed of two ATP-binding proteins (PhnC), two transmembrane proteins (PhnE) and a solute-binding protein (PhnD).

It is found in the cell membrane. The enzyme catalyses phosphonate(out) + ATP + H2O = phosphonate(in) + ADP + phosphate + H(+). Part of the ABC transporter complex PhnCDE involved in phosphonates import. Responsible for energy coupling to the transport system. This is Phosphonates import ATP-binding protein PhnC from Bacillus anthracis.